Consider the following 322-residue polypeptide: Acetylglutamate kinase (322 aa).

Substrate is bound by residues 89–90, R111, and N217; that span reads GG.

The protein belongs to the acetylglutamate kinase family. ArgB subfamily.

The protein resides in the cytoplasm. The catalysed reaction is N-acetyl-L-glutamate + ATP = N-acetyl-L-glutamyl 5-phosphate + ADP. The protein operates within amino-acid biosynthesis; L-arginine biosynthesis; N(2)-acetyl-L-ornithine from L-glutamate: step 2/4. Functionally, catalyzes the ATP-dependent phosphorylation of N-acetyl-L-glutamate. The polypeptide is Acetylglutamate kinase (Ehrlichia ruminantium (strain Welgevonden)).